The following is a 744-amino-acid chain: MDHAEENEILAATQRYYVERPIFSHPVLQERLHTKDKVPDSIADKLKQAFTCTPKKIRNIIYMFLPITKWLPAYKFKEYVLGDLVSGISTGVLQLPQGLAFAMLAAVPPIFGLYSSFYPVIMYCFLGTSRHISIGPFAVISLMIGGVAVRLVPDDIVIPGGVNATNGTEARDALRVKVAMSVTLLSGIIQFCLGVCRFGFVAIYLTEPLVRGFTTAAAVHVFTSMLKYLFGVKTKRYSGIFSVVYSTVAVLQNVKNLNVCSLGVGLMVFGLLLGGKEFNERFKEKLPAPIPLEFFAVVMGTGISAGFNLKESYNVDVVGTLPLGLLPPANPDTSLFHLVYVDAIAIAIVGFSVTISMAKTLANKHGYQVDGNQELIALGLCNSIGSLFQTFSISCSLSRSLVQEGTGGKTQLAGCLASLMILLVILATGFLFESLPQAVLSAIVIVNLKGMFMQFSDLPFFWRTSKIELTIWLTTFVSSLFLGLDYGLITAVIIALLTVIYRTQSPSYKVLGKLPETDVYIDIDAYEEVKEIPGIKIFQINAPIYYANSDLYSNALKRKTGVNPAVIMGARRKAMRKYAKEVGNANMANATVVKADAEVDGEDATKPEEEDGEVKYPPIVIKSTFPEEMQRFMPPGDNVHTVILDFTQVNFIDSVGVKTLAGIVKEYGDVGIYVYLAGCSAQVVNDLTRNRFFENPALWELLFHSIHDAVLGSQLREALAEQEASAPPSQEDLEPNATPATPEA.

At 1–75 (MDHAEENEIL…PITKWLPAYK (75 aa)) the chain is on the cytoplasmic side. A helical transmembrane segment spans residues 76–105 (FKEYVLGDLVSGISTGVLQLPQGLAFAMLA). At 106–108 (AVP) the chain is on the extracellular side. Residues 109 to 126 (PIFGLYSSFYPVIMYCFL) form a helical membrane-spanning segment. The Cytoplasmic segment spans residues 127–137 (GTSRHISIGPF). A helical membrane pass occupies residues 138–151 (AVISLMIGGVAVRL). Topologically, residues 152–168 (VPDDIVIPGGVNATNGT) are extracellular. The Involved in motor function motif lies at 158–168 (IPGGVNATNGT). N-linked (GlcNAc...) asparagine glycans are attached at residues Asn-163 and Asn-166. The chain crosses the membrane as a helical span at residues 169–196 (EARDALRVKVAMSVTLLSGIIQFCLGVC). Residues 197 to 206 (RFGFVAIYLT) lie on the Cytoplasmic side of the membrane. The helical transmembrane segment at 207–230 (EPLVRGFTTAAAVHVFTSMLKYLF) threads the bilayer. The Extracellular segment spans residues 231-241 (GVKTKRYSGIF). Positions 242-253 (SVVYSTVAVLQN) form an intramembrane region, helical. The Extracellular segment spans residues 254–258 (VKNLN). The chain crosses the membrane as a helical span at residues 259-282 (VCSLGVGLMVFGLLLGGKEFNERF). Residues 283 to 291 (KEKLPAPIP) are Cytoplasmic-facing. A helical transmembrane segment spans residues 292-307 (LEFFAVVMGTGISAGF). The Extracellular portion of the chain corresponds to 308–332 (NLKESYNVDVVGTLPLGLLPPANPD). Residues 333 to 367 (TSLFHLVYVDAIAIAIVGFSVTISMAKTLANKHGY) form a helical membrane-spanning segment. Residues 368 to 370 (QVD) are Cytoplasmic-facing. Residues 371-388 (GNQELIALGLCNSIGSLF) form a helical membrane-spanning segment. The Extracellular segment spans residues 389-396 (QTFSISCS). Residues 397 to 406 (LSRSLVQEGT) form a helical membrane-spanning segment. Ser-398 is a salicylate binding site. Topologically, residues 407-410 (GGKT) are cytoplasmic. A helical membrane pass occupies residues 411-432 (QLAGCLASLMILLVILATGFLF). The Extracellular segment spans residues 433–436 (ESLP). Residues 437 to 464 (QAVLSAIVIVNLKGMFMQFSDLPFFWRT) traverse the membrane as a helical segment. Ser-465 is a topological domain (cytoplasmic). The helical transmembrane segment at 466–481 (KIELTIWLTTFVSSLF) threads the bilayer. The Extracellular portion of the chain corresponds to 482-483 (LG). The helical transmembrane segment at 484-504 (LDYGLITAVIIALLTVIYRTQ) threads the bilayer. Residues 505-718 (SPSYKVLGKL…AVLGSQLREA (214 aa)) form an extended region for STAS domain region. Over 505–744 (SPSYKVLGKL…PNATPATPEA (240 aa)) the chain is Cytoplasmic. Residues 525 to 713 (AYEEVKEIPG…HSIHDAVLGS (189 aa)) form the STAS domain. Residues 718-744 (ALAEQEASAPPSQEDLEPNATPATPEA) are disordered.

The protein belongs to the SLC26A/SulP transporter (TC 2.A.53) family. As to quaternary structure, homodimer. Interacts (via STAS domain) with CALM; this interaction is calcium-dependent and the STAS domain interacts with only one lobe of CALM which is an elongated conformation. Interacts with MYH1.

The protein resides in the lateral cell membrane. The catalysed reaction is 2 hydrogencarbonate(in) + chloride(out) = 2 hydrogencarbonate(out) + chloride(in). Functionally, voltage-sensitive motor protein that drives outer hair cell (OHC) electromotility (eM) and participates in sound amplification in the hearing organ. Converts changes in the transmembrane electric potential into mechanical displacements resulting in the coupling of its expansion to movement of a charged voltage sensor across the lipid membrane. The nature of the voltage sensor is not completely clear, and two models compete. In the first model, acts as an incomplete transporter where intracellular chloride anion acts as extrinsic voltage sensor that drives conformational change in the protein which is sufficient to produce a length change in the plane of the membrane and hence in the length of the OHC. The second model in which multiple charged amino acid residues are distributed at the intracellular and extracellular membrane interfaces that form an intrinsic voltage sensor, whose movement produces the non-linear capacitance (NLC). However, the effective voltage sensor may be the result of a hybrid voltage sensor, assembled from intrinsic charge (charged residues) and extrinsic charge (bound anion). Notably, binding of anions to the anion-binding pocket partially neutralizes the intrinsic positive charge rather than to form an electrically negative sensor, therefore remaining charge may serve as voltage sensor that, after depolarization, moves from down (expanded state) to up (contracted) conformation, which is accompanied by an eccentric contraction of the intermembrane cross-sectional area of the protein as well as a major increase in the hydrophobic thickness of the protein having as consequences the plasma membrane thickening and the cell contraction after membrane depolarization. The anion-binding pocket transits from the inward-open (Down) state, where it is exposed toward the intracellular solvent in the absence of anion, to the occluded (Up) state upon anion binding. Salicylate competes for the anion-binding site and inhibits the voltage-sensor movement, and therefore inhibits the charge transfer and electromotility by displacing Cl(-) from the anion-binding site and by preventing the structural transitions to the contracted state. In addition, can act as a weak Cl(-)/HCO3(-) antiporter across the cell membrane and so regulate the intracellular pH of the outer hair cells (OHCs), while firstly found as being unable to mediate electrogenic anion transport. Moreover, supports a role in cardiac mechanical amplification serving as an elastic element to enhance the actomyosin- based sarcomere contraction system. The protein is Prestin of Homo sapiens (Human).